We begin with the raw amino-acid sequence, 195 residues long: Large ribosomal subunit protein eL6 (195 aa).

Phosphoserine occurs at positions 105 and 115.

It belongs to the eukaryotic ribosomal protein eL6 family. Component of the large ribosomal subunit (LSU). Mature yeast ribosomes consist of a small (40S) and a large (60S) subunit. The 40S small subunit contains 1 molecule of ribosomal RNA (18S rRNA) and at least 33 different proteins. The large 60S subunit contains 3 rRNA molecules (25S, 5.8S and 5S rRNA) and at least 46 different proteins.

It is found in the cytoplasm. The protein resides in the nucleus. It localises to the nucleolus. Component of the ribosome, a large ribonucleoprotein complex responsible for the synthesis of proteins in the cell. The small ribosomal subunit (SSU) binds messenger RNAs (mRNAs) and translates the encoded message by selecting cognate aminoacyl-transfer RNA (tRNA) molecules. The large subunit (LSU) contains the ribosomal catalytic site termed the peptidyl transferase center (PTC), which catalyzes the formation of peptide bonds, thereby polymerizing the amino acids delivered by tRNAs into a polypeptide chain. The nascent polypeptides leave the ribosome through a tunnel in the LSU and interact with protein factors that function in enzymatic processing, targeting, and the membrane insertion of nascent chains at the exit of the ribosomal tunnel. This is Large ribosomal subunit protein eL6 (rpl6) from Schizosaccharomyces pombe (strain 972 / ATCC 24843) (Fission yeast).